A 417-amino-acid polypeptide reads, in one-letter code: Serine hydroxymethyltransferase (417 aa).

Residues Leu-121 and 125-127 each bind (6S)-5,6,7,8-tetrahydrofolate; that span reads GHL. Lys-230 bears the N6-(pyridoxal phosphate)lysine mark. 355–357 lines the (6S)-5,6,7,8-tetrahydrofolate pocket; the sequence is SPF.

It belongs to the SHMT family. As to quaternary structure, homodimer. The cofactor is pyridoxal 5'-phosphate.

The protein resides in the cytoplasm. It catalyses the reaction (6R)-5,10-methylene-5,6,7,8-tetrahydrofolate + glycine + H2O = (6S)-5,6,7,8-tetrahydrofolate + L-serine. It participates in one-carbon metabolism; tetrahydrofolate interconversion. Its pathway is amino-acid biosynthesis; glycine biosynthesis; glycine from L-serine: step 1/1. Functionally, catalyzes the reversible interconversion of serine and glycine with tetrahydrofolate (THF) serving as the one-carbon carrier. This reaction serves as the major source of one-carbon groups required for the biosynthesis of purines, thymidylate, methionine, and other important biomolecules. Also exhibits THF-independent aldolase activity toward beta-hydroxyamino acids, producing glycine and aldehydes, via a retro-aldol mechanism. This Legionella pneumophila subsp. pneumophila (strain Philadelphia 1 / ATCC 33152 / DSM 7513) protein is Serine hydroxymethyltransferase.